The following is a 573-amino-acid chain: Putative inorganic phosphate transporter C1683.01 (573 aa).

Helical transmembrane passes span 48 to 68 (MMLA…INLV), 100 to 120 (AASN…GDFF), 124 to 144 (FVYG…IAMP), 154 to 174 (MMWV…DYPM), 194 to 214 (LIFA…IILL), and 230 to 250 (LEGV…GVLI). Residues 261–270 (FKNSQQLNSG) show a composition bias toward polar residues. Disordered stretches follow at residues 261 to 280 (FKNS…TSLN) and 290 to 312 (PSVT…RSNT). The next 6 helical transmembrane spans lie at 348-368 (HLLG…GVNL), 397-417 (LIIA…LVEI), 422-442 (WIQL…AGRW), 451-471 (FACF…TTFI), 487-507 (GISA…FNFL), and 510-530 (IIGY…GILF).

Belongs to the major facilitator superfamily. Sugar transporter (TC 2.A.1.1) family.

It is found in the endoplasmic reticulum membrane. Its function is as follows. High-affinity transporter for external inorganic phosphate. In Schizosaccharomyces pombe (strain 972 / ATCC 24843) (Fission yeast), this protein is Putative inorganic phosphate transporter C1683.01.